The following is a 139-amino-acid chain: Deoxyuridine 5'-triphosphate nucleotidohydrolase (139 aa).

Residues 58–60 (RSG), N71, 75–77 (LID), and M85 contribute to the substrate site.

This sequence belongs to the dUTPase family. Mg(2+) serves as cofactor.

It carries out the reaction dUTP + H2O = dUMP + diphosphate + H(+). It participates in pyrimidine metabolism; dUMP biosynthesis; dUMP from dCTP (dUTP route): step 2/2. Its function is as follows. This enzyme is involved in nucleotide metabolism: it produces dUMP, the immediate precursor of thymidine nucleotides and it decreases the intracellular concentration of dUTP so that uracil cannot be incorporated into DNA. This chain is Deoxyuridine 5'-triphosphate nucleotidohydrolase, found in Gamma-proteobacterium EBAC31A08.